The following is a 248-amino-acid chain: ATP synthase subunit a, chloroplastic (248 aa).

Transmembrane regions (helical) follow at residues 37 to 57, 96 to 116, 134 to 154, 200 to 220, and 221 to 241; these read AQVL…AILA, VPFI…GALL, DINT…YAGL, LVVA…MMFL, and GLFT…AYIG.

This sequence belongs to the ATPase A chain family. As to quaternary structure, F-type ATPases have 2 components, CF(1) - the catalytic core - and CF(0) - the membrane proton channel. CF(1) has five subunits: alpha(3), beta(3), gamma(1), delta(1), epsilon(1). CF(0) has four main subunits: a, b, b' and c.

Its subcellular location is the plastid. The protein localises to the chloroplast thylakoid membrane. Key component of the proton channel; it plays a direct role in the translocation of protons across the membrane. This is ATP synthase subunit a, chloroplastic from Anthoceros angustus (Hornwort).